The following is a 211-amino-acid chain: Protein YCF54, chloroplastic (211 aa).

The N-terminal 80 residues, 1 to 80 (MWSVTGALTV…GESTKYHFLV (80 aa)), are a transit peptide targeting the chloroplast.

This sequence belongs to the ycf54 family. As to quaternary structure, interacts with LFNR1 and CRD1/CHL27 in chloroplasts.

The protein resides in the plastid. It is found in the chloroplast. Functionally, involved in the biosynthesis of chlorophyll; acts probably as a scaffolding factor in the MgProto monomethylester (MgProtoME) cyclase complex to stabilize CRD1/CHL27, the catalytic subunit which catalyzes the formation of a fifth isocyclic ring to tetrapyrroles to form protochlorophyllide. The polypeptide is Protein YCF54, chloroplastic (Arabidopsis thaliana (Mouse-ear cress)).